A 141-amino-acid chain; its full sequence is Hemoglobin subunit alpha (141 aa).

The Globin domain occupies 1–141; sequence VLSPADKTNV…VSTVLTSKYR (141 aa). At serine 3 the chain carries Phosphoserine. Lysine 7 bears the N6-succinyllysine mark. At threonine 8 the chain carries Phosphothreonine. Lysine 11 carries the post-translational modification N6-succinyllysine. Residue lysine 16 is modified to N6-acetyllysine; alternate. Lysine 16 carries the N6-succinyllysine; alternate modification. The residue at position 24 (tyrosine 24) is a Phosphotyrosine. Serine 35 is subject to Phosphoserine. Lysine 40 is modified (N6-succinyllysine). Serine 49 is modified (phosphoserine). Histidine 58 is a binding site for O2. Histidine 87 lines the heme b pocket. The residue at position 102 (serine 102) is a Phosphoserine. Threonine 108 is subject to Phosphothreonine. Position 124 is a phosphoserine (serine 124). Phosphothreonine is present on residues threonine 134 and threonine 137. Serine 138 bears the Phosphoserine mark.

Belongs to the globin family. As to quaternary structure, heterotetramer of two alpha chains and two beta chains. In terms of tissue distribution, red blood cells.

Its function is as follows. Involved in oxygen transport from the lung to the various peripheral tissues. Functionally, hemopressin acts as an antagonist peptide of the cannabinoid receptor CNR1. Hemopressin-binding efficiently blocks cannabinoid receptor CNR1 and subsequent signaling. This chain is Hemoglobin subunit alpha (HBA), found in Lutra lutra (European river otter).